A 389-amino-acid chain; its full sequence is E3 ubiquitin-protein ligase E3D (389 aa).

Ala-2 carries the post-translational modification N-acetylalanine. A BRAT1-like motif motif is present at residues 129-159 (PLPGDNWGALVDEWCCHPDPFANKPLHPREN). Cys-144 is a binding site for Zn(2+). Residues 235–257 (LPSERNFPIIPRSQFVQSVLAQC) form an interaction with UBE2C region. The HECT-like stretch occupies residues 353–389 (LPSTTCLELLLILSKSNATLPPSLRCMNSFQVAFLKM).

Interacts with UBE2C/UbcH10 (E2 ubiquitin-conjugating enzyme). In vitro, interacts with cyclin-B. Post-translationally, ubiquitinated by UBCH10 (E2 ubiquitin-conjugating enzyme).

It localises to the cytoplasm. The enzyme catalyses S-ubiquitinyl-[E2 ubiquitin-conjugating enzyme]-L-cysteine + [acceptor protein]-L-lysine = [E2 ubiquitin-conjugating enzyme]-L-cysteine + N(6)-ubiquitinyl-[acceptor protein]-L-lysine.. The protein operates within protein modification; protein ubiquitination. Functionally, E3 ubiquitin-protein ligase which accepts ubiquitin from specific E2 ubiquitin-conjugating enzymes, and transfers it to substrates, generally promoting their degradation by the proteasome. Independently of its E3 ubiquitin-protein ligase activity, acts as an inhibitor of CPSF3 endonuclease activity by blocking CPSF3 active site. The polypeptide is E3 ubiquitin-protein ligase E3D (UBE3D) (Bos taurus (Bovine)).